The following is a 557-amino-acid chain: Formate--tetrahydrofolate ligase 2 (557 aa).

66–73 (TPAGEGKT) serves as a coordination point for ATP.

It belongs to the formate--tetrahydrofolate ligase family.

It carries out the reaction (6S)-5,6,7,8-tetrahydrofolate + formate + ATP = (6R)-10-formyltetrahydrofolate + ADP + phosphate. It participates in one-carbon metabolism; tetrahydrofolate interconversion. The sequence is that of Formate--tetrahydrofolate ligase 2 from Streptococcus pyogenes serotype M12 (strain MGAS9429).